The chain runs to 368 residues: Queuine tRNA-ribosyltransferase (368 aa).

Catalysis depends on Asp-89, which acts as the Proton acceptor. Residues 89–93 (DSGGF), Asp-143, Gln-187, and Gly-214 each bind substrate. Asp-264 serves as the catalytic Nucleophile. The tract at residues 269–273 (TRNAR) is RNA binding; important for wobble base 34 recognition. Zn(2+) contacts are provided by Cys-302, Cys-304, Cys-307, and His-333.

Belongs to the queuine tRNA-ribosyltransferase family. As to quaternary structure, homodimer. Within each dimer, one monomer is responsible for RNA recognition and catalysis, while the other monomer binds to the replacement base PreQ1. The cofactor is Zn(2+).

It catalyses the reaction 7-aminomethyl-7-carbaguanine + guanosine(34) in tRNA = 7-aminomethyl-7-carbaguanosine(34) in tRNA + guanine. It participates in tRNA modification; tRNA-queuosine biosynthesis. Its function is as follows. Catalyzes the base-exchange of a guanine (G) residue with the queuine precursor 7-aminomethyl-7-deazaguanine (PreQ1) at position 34 (anticodon wobble position) in tRNAs with GU(N) anticodons (tRNA-Asp, -Asn, -His and -Tyr). Catalysis occurs through a double-displacement mechanism. The nucleophile active site attacks the C1' of nucleotide 34 to detach the guanine base from the RNA, forming a covalent enzyme-RNA intermediate. The proton acceptor active site deprotonates the incoming PreQ1, allowing a nucleophilic attack on the C1' of the ribose to form the product. After dissociation, two additional enzymatic reactions on the tRNA convert PreQ1 to queuine (Q), resulting in the hypermodified nucleoside queuosine (7-(((4,5-cis-dihydroxy-2-cyclopenten-1-yl)amino)methyl)-7-deazaguanosine). The polypeptide is Queuine tRNA-ribosyltransferase (Blochmanniella pennsylvanica (strain BPEN)).